A 2760-amino-acid polypeptide reads, in one-letter code: A-kinase anchor protein 13 (2760 aa).

8 disordered regions span residues 356 to 388 (CSHK…QDSC), 442 to 517 (PDAR…EPKQ), 530 to 577 (AAGA…VLPA), 604 to 711 (SSLD…AAHN), 729 to 857 (EKDL…EQEG), 890 to 940 (GGSI…QEIS), 954 to 1029 (EKAL…ASEA), and 1132 to 1162 (EGTD…DLPT). Residues 378–388 (DSRSASHQDSC) are compositionally biased toward polar residues. Residues 442–454 (PDARQHSSGRELP) show a composition bias toward basic and acidic residues. The interval 482–504 (QNSKPQVGESAKERLENSDISSA) is important for interaction with PRKAR2A. Residues 530–547 (AAGADAPAEASPAWSPEE) show a composition bias toward low complexity. Composition is skewed to polar residues over residues 620-638 (KQNS…SQAP), 654-664 (CPQSTETSSGG), and 701-711 (DTVTSDTAAHN). Over residues 769-780 (SSFSLASSPESE) the composition is skewed to low complexity. Residue Ser-776 is modified to Phosphoserine. Thr-801 is subject to Phosphothreonine. Positions 814 to 826 (PDGRDLNDTDKVG) are enriched in basic and acidic residues. Residues 839 to 849 (ELQTSMGNTSP) show a composition bias toward polar residues. The span at 906 to 931 (GKDKATKCPSVKEDVHSSEMSREDQR) shows a compositional bias: basic and acidic residues. Thr-932 is modified (phosphothreonine). Composition is skewed to polar residues over residues 958–972 (QHSN…CLQT) and 1001–1020 (TSLS…SGSS). Ser-962 carries the post-translational modification Phosphoserine. The important for interaction with PRKAR2A stretch occupies residues 1213 to 1228 (SIEETATRIVEAVIKQ). 3 disordered regions span residues 1392 to 1411 (GVLQ…PSDE), 1425 to 1508 (LLCD…VPAN), and 1520 to 1539 (SPFR…DAEM). Positions 1428 to 1439 (DTTGSSSSTDDT) are enriched in low complexity. Residues 1449-1472 (GSDVSLPQTSKLNRSRNHQSSNGF) are compositionally biased toward polar residues. A phosphoserine mark is found at Ser-1450, Ser-1468, Ser-1501, Ser-1526, and Ser-1585. Residues 1546–1695 (QVLGHVVRRP…SRPFHSASAN (150 aa)) are important for interaction with MAP2K3. Residues 1592-1628 (GGGVGNKPSSSLEISSANSSELRNPFSGEEQRSSLMS) are disordered. The span at 1600–1611 (SSSLEISSANSS) shows a compositional bias: low complexity. A phosphoserine mark is found at Ser-1625, Ser-1628, and Ser-1630. Position 1654 is an N6-methyllysine (Lys-1654). Residues 1733–1755 (RNKMSSSKKSKKEKDKKTLNGHT) are disordered. The segment at 1753 to 1800 (GHTFSPIPIVGPINCSQCMKPFTNKDAYTCASCGAFVHKGCRENLASC) adopts a Phorbol-ester/DAG-type zinc-finger fold. Phosphoserine is present on residues Ser-1838, Ser-1857, and Ser-1891. The interaction with ESR1 stretch occupies residues 1881-2760 (MSNTWKFLSH…VPAEGEEIFC (880 aa)). Position 1892 is a phosphothreonine (Thr-1892). Residues Ser-1894 and Ser-1907 each carry the phosphoserine modification. One can recognise a DH domain in the interval 1956 to 2153 (KRQEVIYELM…KDVIGAVDSK (198 aa)). The region spanning 2176 to 2280 (MRMKSGQMFA…WIQIIQDTIN (105 aa)) is the PH domain. Phosphoserine occurs at positions 2292 and 2345. A coiled-coil region spans residues 2292-2329 (SENEEEKRLLDTKARELKEQLQQKDQQILLLLEEKEMI). A Phosphothreonine modification is found at Thr-2415. The segment at 2422–2450 (HQLNASKGGEKEEGDDGQDLRRTESDSGL) is disordered. A compositionally biased stretch (basic and acidic residues) spans 2439–2450 (QDLRRTESDSGL). Residues Ser-2511 and Ser-2514 each carry the phosphoserine modification. Positions 2516–2632 (LIEQEKQRSL…LSQRQMEQDL (117 aa)) form a coiled coil. Disordered stretches follow at residues 2568–2588 (AERE…REEL) and 2660–2760 (TPSI…EIFC). Composition is skewed to polar residues over residues 2660–2684 (TPSI…SISR) and 2696–2711 (SSAS…SQAP). The residue at position 2676 (Ser-2676) is a Phosphoserine. The span at 2743–2752 (PGDGPAPEVP) shows a compositional bias: low complexity.

As to quaternary structure, interacts with the cAMP-dependent protein kinase (PKA) holoenzyme and with the regulatory subunit PRKAR2A. Interacts with RHOA. Also interacts with RHOB and RHOC. Identified in a ternary complex with RHOA and PRKAR2A. Identified in a complex with NR3C1 and RHOA. Interacts with BRAF and KSR1. Identified in a complex with BRAF and KSR1. Component of a signaling complex containing at least AKAP13, PKN1, MAPK14, ZAK and MAP2K3. Within this complex, AKAP13 interacts directly with PKN1, which in turn recruits MAPK14, MAP2K3 and ZAK. Interacts (phosphorylated form) with YWHAB and YWHAZ. Interaction with YWHAB inhibits activation of RHOA, interferes with PKN1 binding and activation of MAP kinases. Interacts with GNA12. Interacts with IKBKB. Interacts with ESR1, THRA, PPARA and NME2. Interacts (via the C-terminal domain after the PH domain) with MEF2C and RXRB. Interacts (via the C-terminal domain after the PH domain) with PRKD1. Detected in bone osteoblasts (at protein level).

The protein resides in the cytoplasm. Its subcellular location is the cytosol. The protein localises to the cell cortex. It is found in the nucleus. It localises to the membrane. Functionally, scaffold protein that plays an important role in assembling signaling complexes downstream of several types of G protein-coupled receptors. Activates RHOA in response to signaling via G protein-coupled receptors via its function as Rho guanine nucleotide exchange factor. May also activate other Rho family members. Part of a kinase signaling complex that links ADRA1A and ADRA1B adrenergic receptor signaling to the activation of downstream p38 MAP kinases, such as MAPK11 and MAPK14. Part of a signaling complex that links ADRA1B signaling to the activation of RHOA and IKBKB/IKKB, leading to increased NF-kappa-B transcriptional activity. Part of a RHOA-dependent signaling cascade that mediates responses to lysophosphatidic acid (LPA), a signaling molecule that activates G-protein coupled receptors and potentiates transcriptional activation of the glucocorticoid receptor NR3C1. Part of a signaling cascade that stimulates MEF2C-dependent gene expression in response to lysophosphatidic acid (LPA). Part of a signaling pathway that activates MAPK11 and/or MAPK14 and leads to increased transcription activation of the estrogen receptors ESR1 and ESR2. Part of a signaling cascade that links cAMP and EGFR signaling to BRAF signaling and to PKA-mediated phosphorylation of KSR1, leading to the activation of downstream MAP kinases, such as MAPK1 or MAPK3. Functions as a scaffold protein that anchors cAMP-dependent protein kinase (PKA) and PRKD1. This promotes activation of PRKD1, leading to increased phosphorylation of HDAC5 and ultimately cardiomyocyte hypertrophy. Has no guanine nucleotide exchange activity on CDC42, Ras or Rac. Required for normal embryonic heart development, and in particular for normal sarcomere formation in the developing cardiomyocytes. Plays a role in cardiomyocyte growth and cardiac hypertrophy in response to activation of the beta-adrenergic receptor by phenylephrine or isoproterenol. Required for normal adaptive cardiac hypertrophy in response to pressure overload. Plays a role in osteogenesis. The sequence is that of A-kinase anchor protein 13 from Rattus norvegicus (Rat).